The sequence spans 155 residues: Cytochrome c-type biogenesis protein CcmE (155 aa).

At 1–7 the chain is on the cytoplasmic side; the sequence is MTRKQKR. The chain crosses the membrane as a helical; Signal-anchor for type II membrane protein span at residues 8-28; that stretch reads LVVIAGGMSFILAAVLLVMFA. Topologically, residues 29 to 155 are periplasmic; that stretch reads FSQSVAYFYM…GKGQEAKATP (127 aa). 2 residues coordinate heme: histidine 124 and tyrosine 128.

The protein belongs to the CcmE/CycJ family.

The protein localises to the cell inner membrane. Heme chaperone required for the biogenesis of c-type cytochromes. Transiently binds heme delivered by CcmC and transfers the heme to apo-cytochromes in a process facilitated by CcmF and CcmH. This is Cytochrome c-type biogenesis protein CcmE from Rhizobium etli (strain ATCC 51251 / DSM 11541 / JCM 21823 / NBRC 15573 / CFN 42).